The following is a 580-amino-acid chain: tRNA-guanine(15) transglycosylase (580 aa).

Catalysis depends on aspartate 91, which acts as the Nucleophile. Substrate contacts are provided by aspartate 126 and alanine 192. Zn(2+)-binding residues include cysteine 275, cysteine 277, and cysteine 280. The PUA domain maps to 504-579 (RMRVVVDEDA…LAVKVRRGVE (76 aa)).

Belongs to the archaeosine tRNA-ribosyltransferase family. Zn(2+) is required as a cofactor.

The enzyme catalyses guanosine(15) in tRNA + 7-cyano-7-deazaguanine = 7-cyano-7-carbaguanosine(15) in tRNA + guanine. Its pathway is tRNA modification; archaeosine-tRNA biosynthesis. Its function is as follows. Exchanges the guanine residue with 7-cyano-7-deazaguanine (preQ0) at position 15 in the dihydrouridine loop (D-loop) of archaeal tRNAs. This chain is tRNA-guanine(15) transglycosylase, found in Thermococcus kodakarensis (strain ATCC BAA-918 / JCM 12380 / KOD1) (Pyrococcus kodakaraensis (strain KOD1)).